The primary structure comprises 68 residues: UPF0337 protein RB10934 (68 aa).

Belongs to the UPF0337 (CsbD) family.

The protein is UPF0337 protein RB10934 of Rhodopirellula baltica (strain DSM 10527 / NCIMB 13988 / SH1).